The sequence spans 152 residues: Large ribosomal subunit protein bL9 (152 aa).

It belongs to the bacterial ribosomal protein bL9 family.

Functionally, binds to the 23S rRNA. The chain is Large ribosomal subunit protein bL9 from Synechocystis sp. (strain ATCC 27184 / PCC 6803 / Kazusa).